Reading from the N-terminus, the 728-residue chain is Microtubule-associated protein VP5 (728 aa).

It belongs to the reoviridae microtubule-associated protein family.

It is found in the virion. It localises to the host cytoplasm. The protein resides in the host cytoskeleton. Functionally, minor inner capsid component. Displays NTPase and RNA 5'-triphosphatase (RTPase) activities. May function as a cofactor of polymerase. Associates with microtubules and plays a role in the formation, structural organization and morphology of viral inclusions, where the assembly of cores and the replication of viral RNA occur. The sequence is that of Microtubule-associated protein VP5 (S5) from Ctenopharyngodon idella (Grass carp).